The primary structure comprises 291 residues: MKSQFRHVALIGKYQAQGSRSALEDIAHFLGAQGCEVALEEDTARNTGLTQYPTLDAAGIGAQCDLALVVGGDGTMLGIGRLLAQFGVPVVGINQGRLGFITDIGFEHYQNTLAPMLRGEFEEDRRWMMQAKVVRDGHCVFRATAMNDVVVNRGATSGMVELRVEVDGRFVANQRADGLIIASPTGSTAYALSAGGPMLHPSIAGWVLVPIAPHTLSNRPIVLSDSGEVVIEIVAGRDASASFDQQSLATLLHGDRISVRRSEHQMRFLHPKGWSYFDTLRKKLHWNEGVA.

Residue aspartate 73 is the Proton acceptor of the active site. NAD(+) contacts are provided by residues 73 to 74, 147 to 148, arginine 175, aspartate 177, 188 to 193, alanine 212, and glutamine 246; these read DG, ND, and TAYALS.

The protein belongs to the NAD kinase family. It depends on a divalent metal cation as a cofactor.

It is found in the cytoplasm. It catalyses the reaction NAD(+) + ATP = ADP + NADP(+) + H(+). Functionally, involved in the regulation of the intracellular balance of NAD and NADP, and is a key enzyme in the biosynthesis of NADP. Catalyzes specifically the phosphorylation on 2'-hydroxyl of the adenosine moiety of NAD to yield NADP. The protein is NAD kinase of Polaromonas naphthalenivorans (strain CJ2).